Reading from the N-terminus, the 264-residue chain is Matrilysin (264 aa).

A signal peptide spans methionine 1–alanine 17. Positions leucine 18 to glutamate 94 are cleaved as a propeptide — activation peptide. Residues proline 85–valine 92 carry the Cysteine switch motif. Cysteine 87 is a binding site for Zn(2+). Aspartate 153 is a Ca(2+) binding site. 2 residues coordinate Zn(2+): histidine 163 and aspartate 165. Aspartate 170, glycine 171, glycine 173, and threonine 175 together coordinate Ca(2+). Histidine 178 serves as a coordination point for Zn(2+). Residues glycine 185, glycine 187, and aspartate 189 each contribute to the Ca(2+) site. Histidine 191 contacts Zn(2+). Residues aspartate 193 and glutamate 196 each contribute to the Ca(2+) site. Residue histidine 214 coordinates Zn(2+). The active site involves glutamate 215. Residues histidine 218 and histidine 224 each contribute to the Zn(2+) site.

It belongs to the peptidase M10A family. Ca(2+) is required as a cofactor. The cofactor is Zn(2+). Expressed in the intestinal epithelium (at protein level).

The protein localises to the secreted. It is found in the extracellular space. The protein resides in the extracellular matrix. It carries out the reaction Cleavage of 14-Ala-|-Leu-15 and 16-Tyr-|-Leu-17 in B chain of insulin. No action on collagen types I, II, IV, V. Cleaves gelatin chain alpha2(I) &gt; alpha1(I).. Degrades casein, gelatins of types I, III, IV, and V, and fibronectin. Activates procollagenase. Its function is as follows. May play a role in tissue reorganization. This is Matrilysin (Mmp7) from Mus musculus (Mouse).